The chain runs to 570 residues: Adenine deaminase 2 (570 aa).

This sequence belongs to the metallo-dependent hydrolases superfamily. Adenine deaminase family. It depends on Mn(2+) as a cofactor.

It catalyses the reaction adenine + H2O + H(+) = hypoxanthine + NH4(+). This chain is Adenine deaminase 2, found in Carboxydothermus hydrogenoformans (strain ATCC BAA-161 / DSM 6008 / Z-2901).